A 152-amino-acid chain; its full sequence is UPF0266 membrane protein PM0830 (152 aa).

Helical transmembrane passes span 1–21, 45–65, and 66–86; these read MMIINVLLCLGIFCFLLYAFY, KDALIFSLLIGIIIYQTYTNL, and SSATLYLLTALILLSVYAAFI.

It belongs to the UPF0266 family.

It is found in the cell inner membrane. This Pasteurella multocida (strain Pm70) protein is UPF0266 membrane protein PM0830.